The sequence spans 269 residues: Glutamate 5-kinase (269 aa).

K14 is a binding site for ATP. Substrate-binding residues include S54, D141, and N157. ATP contacts are provided by residues S177–D178 and T219–K225.

It belongs to the glutamate 5-kinase family.

Its subcellular location is the cytoplasm. It catalyses the reaction L-glutamate + ATP = L-glutamyl 5-phosphate + ADP. It functions in the pathway amino-acid biosynthesis; L-proline biosynthesis; L-glutamate 5-semialdehyde from L-glutamate: step 1/2. In terms of biological role, catalyzes the transfer of a phosphate group to glutamate to form L-glutamate 5-phosphate. The protein is Glutamate 5-kinase of Clostridium perfringens (strain 13 / Type A).